We begin with the raw amino-acid sequence, 744 residues long: Deleted in azoospermia protein 1 (744 aa).

Positions 1-10 (MSAANPETPN) are enriched in polar residues. A disordered region spans residues 1 to 27 (MSAANPETPNSTISREASTQSSSAAAS). A compositionally biased stretch (low complexity) spans 11-27 (STISREASTQSSSAAAS). The RRM 1 domain occupies 40–115 (NTVFVGGIDA…KKLKLGPAIR (76 aa)). Residues 163–175 (QHVQSAANPETPN) are compositionally biased toward polar residues. A disordered region spans residues 163-192 (QHVQSAANPETPNSTISREASTQSSSAAAS). A compositionally biased stretch (low complexity) spans 176-192 (STISREASTQSSSAAAS). In terms of domain architecture, RRM 2 spans 205–280 (NTVFVGGIDA…KKLKLGPAIR (76 aa)). Polar residues predominate over residues 328–340 (QHVQSAANPETPN). The segment at 328–357 (QHVQSAANPETPNSTISREASTQSSSAAAS) is disordered. Low complexity predominate over residues 341 to 357 (STISREASTQSSSAAAS). The region spanning 370 to 445 (NTVFVGGIDA…KKLKLGPAIR (76 aa)) is the RRM 3 domain. 9 consecutive DAZ domains span residues 497 to 520 (AYSAYPHSPGQVITGCQLLVYNYQ), 521 to 544 (EYPTYPDSAFQVTTGYQLPVYNYQ), 545 to 568 (PFPAYPRSPFQVTAGYQLPVYNYQ), 569 to 592 (AFPAYPNSPFQVATGYQFPVYNYQ), 593 to 616 (PFPAYPSSPFQVTAGYQLPVYNYQ), 617 to 640 (AFPAYPNSPFQVATGYQFPVYNYQ), 641 to 664 (AFPAYPNSPVQVTTGYQLPVYNYQ), 665 to 688 (AFPAYPSSPFQVTTGYQLPVYNYQ), and 689 to 712 (AFPAYPNSAVQVTTGYQFHVYNYQ).

It belongs to the RRM DAZ family. Forms a heterodimer with BOLL and DAZL. Interacts with PUM2, DAZAP1, DAZAP2, DZIP1 and DZIP3. In terms of tissue distribution, testis-specific. Expression restricted to premeiotic germ cells, particularly in spermatogonia (at protein level).

The protein localises to the cytoplasm. It localises to the nucleus. RNA-binding protein that plays an essential role in spermatogenesis. May act by binding to the 3'-UTR of mRNAs and regulating their translation. Promotes germ-cell progression to meiosis and formation of haploid germ cells. The polypeptide is Deleted in azoospermia protein 1 (DAZ1) (Homo sapiens (Human)).